Consider the following 485-residue polypeptide: Bcl-2-like protein 13 (485 aa).

The short motif at 14 to 30 (ETKYVVLSYLGLLSQEK) is the BH4 element. S38 is modified (phosphoserine). The BH3 motif lies at 100–116 (MEDCLAHLGEKVSQELK). The short motif at 147–157 (ASGWNKILVPL) is the BH1 element. The short motif at 193 to 206 (YIIQQGGWGTVFSL) is the BH2 element. Positions 218 to 248 (AEDSNDIYILPSDNSGQVSPPESPTVTTSWQ) are disordered. Positions 229–248 (SDNSGQVSPPESPTVTTSWQ) are enriched in polar residues. One copy of the A repeat lies at 246–256 (SWQSESLPVSL). Residues S259, S261, S303, S326, S371, S375, S410, S420, S426, S429, and S444 each carry the phosphoserine modification. Residues 261–271 (SWHTESLPVSL) form an A; approximate repeat. The disordered stretch occupies residues 418–451 (EESLVEELSPASEKKPVPPSEGKSRLSPAGEMKP). The B repeat unit spans residues 425-441 (LSPASEKKPVPPSEGKS). A B; approximate repeat occupies 443 to 459 (LSPAGEMKPMPLSEGKS). Residues 460 to 480 (ILLFGGAAAVAILAVAIGVAL) form a helical membrane-spanning segment.

Belongs to the Bcl-2 family. In terms of assembly, monomer. Ubiquitous, with the highest levels of expression in heart, placenta and pancreas.

The protein resides in the mitochondrion membrane. Its subcellular location is the nucleus. Functionally, may promote the activation of caspase-3 and apoptosis. The polypeptide is Bcl-2-like protein 13 (BCL2L13) (Homo sapiens (Human)).